Here is a 198-residue protein sequence, read N- to C-terminus: Na(+)-translocating NADH-quinone reductase subunit E (198 aa).

6 helical membrane passes run 11–31 (SVFIENMALSFFLGMCTFLAV), 35–55 (VSTAFGLGVAVTVVLGISVPV), 77–97 (FLNFITFIGVIAALVQILEMI), 110–130 (GIFLPLITVNCAIFGGVSFMV), 140–160 (VVYGIGAGTGWMLAIVALAGI), and 176–196 (LGITFITVGLMALGFMSFSGV).

This sequence belongs to the NqrDE/RnfAE family. As to quaternary structure, composed of six subunits; NqrA, NqrB, NqrC, NqrD, NqrE and NqrF.

It is found in the cell inner membrane. It carries out the reaction a ubiquinone + n Na(+)(in) + NADH + H(+) = a ubiquinol + n Na(+)(out) + NAD(+). NQR complex catalyzes the reduction of ubiquinone-1 to ubiquinol by two successive reactions, coupled with the transport of Na(+) ions from the cytoplasm to the periplasm. NqrA to NqrE are probably involved in the second step, the conversion of ubisemiquinone to ubiquinol. In Histophilus somni (strain 129Pt) (Haemophilus somnus), this protein is Na(+)-translocating NADH-quinone reductase subunit E.